The sequence spans 606 residues: Leucine-rich repeat and immunoglobulin-like domain-containing nogo receptor-interacting protein 2 (606 aa).

Residues 1–27 form the signal peptide; it reads MLHTAIPCWQPFLGLAVVLLLMGSTIG. The LRRNT domain occupies 28–57; sequence CPARCECSAQNKSVSCHRRRLLAIPEGIPI. The Extracellular portion of the chain corresponds to 28 to 545; sequence CPARCECSAQ…LDLKTILVST (518 aa). N-linked (GlcNAc...) asparagine glycosylation occurs at Asn38. 12 LRR repeats span residues 58–79, 82–103, 106–127, 130–151, 154–175, 178–199, 202–223, 226–247, 250–271, 274–295, 298–319, and 322–343; these read ETKI…EFIS, LLEE…AFNN, NLRS…VFTG, NLTK…MFQD, NLKS…AFSG, SLEQ…ALSH, SLIA…AFKR, HLKN…NSLY, NLTS…AFKH, YLTH…MFSD, RLQE…SFQG, and FLRV…VFSS. Asn130 is a glycosylation site (N-linked (GlcNAc...) asparagine). Asn188 carries N-linked (GlcNAc...) asparagine glycosylation. N-linked (GlcNAc...) asparagine glycosylation is found at Asn250, Asn260, and Asn279. An N-linked (GlcNAc...) asparagine glycan is attached at Asn327. The LRRCT domain maps to 355–409; sequence NPLACDCRLLWLLQRQPNLQFGGQQPMCAGPDTIRERSFKDFHSTALSFYFTCKK. Cysteines 432 and 483 form a disulfide. Residues Asn491, Asn522, and Asn527 are each glycosylated (N-linked (GlcNAc...) asparagine). The chain crosses the membrane as a helical span at residues 546–566; it reads AMGCFTFLGVVLFCFLLLFVW. Residues 567-606 lie on the Cytoplasmic side of the membrane; the sequence is SRGKGKHKNSIDLEYVPRKNNGAVVEGEVAGPRRFNMKMI.

It is found in the membrane. The polypeptide is Leucine-rich repeat and immunoglobulin-like domain-containing nogo receptor-interacting protein 2 (Lingo2) (Mus musculus (Mouse)).